Here is a 384-residue protein sequence, read N- to C-terminus: S-adenosylmethionine synthase (384 aa).

His-15 is an ATP binding site. Residue Asp-17 participates in Mg(2+) binding. Glu-43 is a K(+) binding site. L-methionine is bound by residues Glu-56 and Gln-99. The segment at 99–109 (QSPDINQGVDR) is flexible loop. Residues 164 to 166 (DAK), 230 to 231 (RF), Asp-239, 245 to 246 (RK), Ala-262, and Lys-266 contribute to the ATP site. An L-methionine-binding site is contributed by Asp-239. L-methionine is bound at residue Lys-270.

This sequence belongs to the AdoMet synthase family. As to quaternary structure, homotetramer; dimer of dimers. It depends on Mg(2+) as a cofactor. K(+) serves as cofactor.

The protein localises to the cytoplasm. It catalyses the reaction L-methionine + ATP + H2O = S-adenosyl-L-methionine + phosphate + diphosphate. It functions in the pathway amino-acid biosynthesis; S-adenosyl-L-methionine biosynthesis; S-adenosyl-L-methionine from L-methionine: step 1/1. In terms of biological role, catalyzes the formation of S-adenosylmethionine (AdoMet) from methionine and ATP. The overall synthetic reaction is composed of two sequential steps, AdoMet formation and the subsequent tripolyphosphate hydrolysis which occurs prior to release of AdoMet from the enzyme. The sequence is that of S-adenosylmethionine synthase from Photobacterium profundum (strain SS9).